Consider the following 404-residue polypeptide: MKPPFEQALGIIRQLKRHGYEAYFVGGAVRDLLIGRAIGDVDIATSALPEEVMRLFPKTIDVGSKHGTVVVVHEGTAYEVTTFRTDGDYEDHRRPESVTFVRSLEEDLKRRDFTMNAIAMDERGTIIDPFGGQEAIERRLICTVGAADERFREDALRMMRAVRFVSQLGFALSEDTKSAIVQNAPLMAHISVERMTMEMEKLLAGPFVAEALPLLADTGLFAYLPGLAAKVQLLRSAAAFRWPWLTKREERWALLCRALDVKDIRPFLRAWKLPNKVIDEAGAILAALDDVPRPEEWTNEQLFSAGLERALSVEAVRAALCGAPSEPHHEELRRRFAALPIKTKGELAVNGKDVIRWAGKPAGPWVKETLDAIWRAVVSSEVENEKERIYAWLMERNRTHEKNC.

G27 and R30 together coordinate ATP. Residues G27 and R30 each contribute to the CTP site. Mg(2+)-binding residues include D40 and D42. ATP contacts are provided by R111, D154, R157, R160, and R163. CTP contacts are provided by R111, D154, R157, R160, and R163.

This sequence belongs to the tRNA nucleotidyltransferase/poly(A) polymerase family. Bacterial CCA-adding enzyme type 3 subfamily. As to quaternary structure, homodimer. Mg(2+) serves as cofactor.

The catalysed reaction is a tRNA precursor + 2 CTP + ATP = a tRNA with a 3' CCA end + 3 diphosphate. It carries out the reaction a tRNA with a 3' CCA end + 2 CTP + ATP = a tRNA with a 3' CCACCA end + 3 diphosphate. Its function is as follows. Catalyzes the addition and repair of the essential 3'-terminal CCA sequence in tRNAs without using a nucleic acid template. Adds these three nucleotides in the order of C, C, and A to the tRNA nucleotide-73, using CTP and ATP as substrates and producing inorganic pyrophosphate. tRNA 3'-terminal CCA addition is required both for tRNA processing and repair. Also involved in tRNA surveillance by mediating tandem CCA addition to generate a CCACCA at the 3' terminus of unstable tRNAs. While stable tRNAs receive only 3'-terminal CCA, unstable tRNAs are marked with CCACCA and rapidly degraded. This chain is CCA-adding enzyme, found in Geobacillus kaustophilus (strain HTA426).